We begin with the raw amino-acid sequence, 240 residues long: Tumor protein p53-inducible nuclear protein 1 (240 aa).

The LIR signature appears at 25 to 37 (EKEDDEWILVDFI).

In terms of assembly, interacts with p53/TP53 and HIPK2. Interacts with PRKCG, GABARAP, GABARAPL1, GABARAPL2, MAP1LC3A, MAP1LC3B and MAP1LC3C. In terms of tissue distribution, ubiquitously expressed.

The protein localises to the cytoplasm. It is found in the cytosol. The protein resides in the nucleus. It localises to the PML body. Its subcellular location is the cytoplasmic vesicle. The protein localises to the autophagosome. In terms of biological role, antiproliferative and proapoptotic protein involved in cell stress response which acts as a dual regulator of transcription and autophagy. Acts as a positive regulator of autophagy. In response to cellular stress or activation of autophagy, relocates to autophagosomes where it interacts with autophagosome-associated proteins GABARAP, GABARAPL1/L2, MAP1LC3A/B/C and regulates autophagy. Acts as an antioxidant and plays a major role in p53/TP53-driven oxidative stress response. Possesses both a p53/TP53-independent intracellular reactive oxygen species (ROS) regulatory function and a p53/TP53-dependent transcription regulatory function. Positively regulates p53/TP53 and p73/TP73 and stimulates their capacity to induce apoptosis and regulate cell cycle. In response to double-strand DNA breaks, promotes p53/TP53 phosphorylation on 'Ser-46' and subsequent apoptosis. Acts as a tumor suppressor by inducing cell death by an autophagy and caspase-dependent mechanism. Can reduce cell migration by regulating the expression of SPARC. In Homo sapiens (Human), this protein is Tumor protein p53-inducible nuclear protein 1 (TP53INP1).